The primary structure comprises 388 residues: Succinate--CoA ligase [ADP-forming] subunit beta (388 aa).

The 236-residue stretch at 9–244 folds into the ATP-grasp domain; sequence KQLFAEFGLP…PSQEDEREAH (236 aa). ATP-binding positions include Lys-46, 53–55, Glu-99, Ser-102, and Glu-107; that span reads GRG. 2 residues coordinate Mg(2+): Asn-199 and Asp-213. Residues Asn-264 and 321–323 each bind substrate; that span reads GIV.

This sequence belongs to the succinate/malate CoA ligase beta subunit family. In terms of assembly, heterotetramer of two alpha and two beta subunits. Mg(2+) is required as a cofactor.

It catalyses the reaction succinate + ATP + CoA = succinyl-CoA + ADP + phosphate. It carries out the reaction GTP + succinate + CoA = succinyl-CoA + GDP + phosphate. Its pathway is carbohydrate metabolism; tricarboxylic acid cycle; succinate from succinyl-CoA (ligase route): step 1/1. Functionally, succinyl-CoA synthetase functions in the citric acid cycle (TCA), coupling the hydrolysis of succinyl-CoA to the synthesis of either ATP or GTP and thus represents the only step of substrate-level phosphorylation in the TCA. The beta subunit provides nucleotide specificity of the enzyme and binds the substrate succinate, while the binding sites for coenzyme A and phosphate are found in the alpha subunit. In Vibrio parahaemolyticus serotype O3:K6 (strain RIMD 2210633), this protein is Succinate--CoA ligase [ADP-forming] subunit beta.